Reading from the N-terminus, the 124-residue chain is Large ribosomal subunit protein bL17 (124 aa).

Belongs to the bacterial ribosomal protein bL17 family. In terms of assembly, part of the 50S ribosomal subunit. Contacts protein L32.

The sequence is that of Large ribosomal subunit protein bL17 from Borrelia turicatae (strain 91E135).